A 657-amino-acid polypeptide reads, in one-letter code: Hemocyanin A chain (657 aa).

An intrachain disulfide couples C93 to C98. N-linked (GlcNAc...) asparagine glycosylation occurs at N167. Cu cation is bound by residues H194, H198, H224, H344, H348, and H384. Cystine bridges form between C483/C502 and C562/C609. A disordered region spans residues 594-616; the sequence is EGHNGGHDYGGTHAQCGVHGEAY.

This sequence belongs to the tyrosinase family. Hemocyanin subfamily. In terms of assembly, hexamer of a number of different chains, of which A, B, and C have been identified. As to expression, hemolymph.

The protein localises to the secreted. It localises to the extracellular space. Functionally, hemocyanins are copper-containing oxygen carriers occurring freely dissolved in the hemolymph of many mollusks and arthropods. The protein is Hemocyanin A chain of Panulirus interruptus (California spiny lobster).